Reading from the N-terminus, the 591-residue chain is Aspartate--tRNA(Asp/Asn) ligase (591 aa).

Glu176 serves as a coordination point for L-aspartate. The interval 200-203 (QLFK) is aspartate. Arg222 provides a ligand contact to L-aspartate. ATP contacts are provided by residues 222-224 (RDE) and Gln231. His450 contacts L-aspartate. Glu484 is a binding site for ATP. Arg491 lines the L-aspartate pocket. Position 536 to 539 (536 to 539 (GLDR)) interacts with ATP.

It belongs to the class-II aminoacyl-tRNA synthetase family. Type 1 subfamily. As to quaternary structure, homodimer.

It is found in the cytoplasm. It catalyses the reaction tRNA(Asx) + L-aspartate + ATP = L-aspartyl-tRNA(Asx) + AMP + diphosphate. Functionally, aspartyl-tRNA synthetase with relaxed tRNA specificity since it is able to aspartylate not only its cognate tRNA(Asp) but also tRNA(Asn). Reaction proceeds in two steps: L-aspartate is first activated by ATP to form Asp-AMP and then transferred to the acceptor end of tRNA(Asp/Asn). The chain is Aspartate--tRNA(Asp/Asn) ligase from Bacillus thuringiensis (strain Al Hakam).